The primary structure comprises 537 residues: Tyrosine-protein kinase Fyn (537 aa).

A lipid anchor (N-myristoyl glycine) is attached at Gly-2. S-palmitoyl cysteine attachment occurs at residues Cys-3 and Cys-6. Thr-12 is subject to Phosphothreonine; by PKC. 2 positions are modified to phosphoserine: Ser-21 and Ser-26. The region spanning 82-143 is the SH3 domain; sequence TGVTLFVALY…PSNYVAPVDS (62 aa). An SH2 domain is found at 149-246; that stretch reads WYFGKLGRKD…GLCCRLVVPC (98 aa). Tyr-185 carries the phosphotyrosine modification. Residues 271 to 524 enclose the Protein kinase domain; that stretch reads LQLIKRLGNG…YLQGFLEDYF (254 aa). ATP-binding positions include 277 to 285 and Lys-299; that span reads LGNGQFGEV. Asp-390 serves as the catalytic Proton acceptor. Tyr-420 bears the Phosphotyrosine; by autocatalysis mark. Tyr-531 is modified (phosphotyrosine; by CSK).

The protein belongs to the protein kinase superfamily. Tyr protein kinase family. SRC subfamily. Interacts (via its SH3 domain) with PIK3R1 and PRMT8. Interacts with FYB1, PAG1, and SH2D1A. Interacts with CD79A (tyrosine-phosphorylated form); the interaction increases FYN activity. Interacts (via SH2 domain) with CSF1R (tyrosine phosphorylated). Interacts with TOM1L1 (phosphorylated form). Interacts with KDR (tyrosine phosphorylated). Interacts (via SH3 domain) with KLHL2 (via N-terminus). Interacts with SH2D1A and SLAMF1. Interacts with ITCH; the interaction phosphorylates ITCH and negatively regulates its activity. Interacts with FASLG. Interacts with RUNX3. Interacts with KIT. Interacts with EPHA8; possible downstream effector of EPHA8 in regulation of cell adhesion. Interacts with PTK2/FAK1; this interaction leads to PTK2/FAK1 phosphorylation and activation. Interacts with CAV1; this interaction couples integrins to the Ras-ERK pathway. Interacts with UNC119. Interacts (via SH2 domain) with PTPRH (phosphorylated form). Interacts with PTPRO (phosphorylated form). Interacts with PTPRB (phosphorylated form). Interacts with FYB2. Interacts with DSCAM. Interacts with SKAP1 and FYB1; this interaction promotes the phosphorylation of CLNK. Interacts with NEDD9; in the presence of PTK2. The cofactor is Mn(2+). Autophosphorylated at Tyr-420. Phosphorylation on the C-terminal tail at Tyr-531 by CSK maintains the enzyme in an inactive state. PTPRC/CD45 dephosphorylates Tyr-531 leading to activation. Ultraviolet B (UVB) strongly increase phosphorylation at Thr-12 and kinase activity, and promotes translocation from the cytoplasm to the nucleus. Dephosphorylation at Tyr-420 by PTPN2 negatively regulates T-cell receptor signaling. Phosphorylated at tyrosine residues, which can be enhanced by NTN1. Post-translationally, palmitoylated. Palmitoylation at Cys-3 and Cys-6, probably by ZDHHC21, regulates subcellular location.

The protein resides in the cytoplasm. The protein localises to the nucleus. It localises to the cell membrane. Its subcellular location is the perikaryon. It carries out the reaction L-tyrosyl-[protein] + ATP = O-phospho-L-tyrosyl-[protein] + ADP + H(+). With respect to regulation, inhibited by phosphorylation of Tyr-531 by leukocyte common antigen and activated by dephosphorylation of this site. Its function is as follows. Non-receptor tyrosine-protein kinase that plays a role in many biological processes including regulation of cell growth and survival, cell adhesion, integrin-mediated signaling, cytoskeletal remodeling, cell motility, immune response and axon guidance. Inactive FYN is phosphorylated on its C-terminal tail within the catalytic domain. Following activation by PKA, the protein subsequently associates with PTK2/FAK1, allowing PTK2/FAK1 phosphorylation, activation and targeting to focal adhesions. Involved in the regulation of cell adhesion and motility through phosphorylation of CTNNB1 (beta-catenin) and CTNND1 (delta-catenin). Regulates cytoskeletal remodeling by phosphorylating several proteins including the actin regulator WAS and the microtubule-associated proteins MAP2 and MAPT. Promotes cell survival by phosphorylating AGAP2/PIKE-A and preventing its apoptotic cleavage. Participates in signal transduction pathways that regulate the integrity of the glomerular slit diaphragm (an essential part of the glomerular filter of the kidney) by phosphorylating several slit diaphragm components including NPHS1, KIRREL1 and TRPC6. Plays a role in neural processes by phosphorylating DPYSL2, a multifunctional adapter protein within the central nervous system, ARHGAP32, a regulator for Rho family GTPases implicated in various neural functions, and SNCA, a small pre-synaptic protein. Involved in reelin signaling by mediating phosphorylation of DAB1 following reelin (RELN)-binding to its receptor. Participates in the downstream signaling pathways that lead to T-cell differentiation and proliferation following T-cell receptor (TCR) stimulation. Phosphorylates PTK2B/PYK2 in response to T-cell receptor activation. Also participates in negative feedback regulation of TCR signaling through phosphorylation of PAG1, thereby promoting interaction between PAG1 and CSK and recruitment of CSK to lipid rafts. CSK maintains LCK and FYN in an inactive form. Promotes CD28-induced phosphorylation of VAV1. In mast cells, phosphorylates CLNK after activation of immunoglobulin epsilon receptor signaling. Can also promote CD244-mediated NK cell activation. The polypeptide is Tyrosine-protein kinase Fyn (Sus scrofa (Pig)).